The following is a 455-amino-acid chain: UDP-N-acetylmuramoylalanine--D-glutamate ligase (455 aa).

119–125 (GTNGKTT) serves as a coordination point for ATP.

This sequence belongs to the MurCDEF family.

It is found in the cytoplasm. It carries out the reaction UDP-N-acetyl-alpha-D-muramoyl-L-alanine + D-glutamate + ATP = UDP-N-acetyl-alpha-D-muramoyl-L-alanyl-D-glutamate + ADP + phosphate + H(+). Its pathway is cell wall biogenesis; peptidoglycan biosynthesis. Cell wall formation. Catalyzes the addition of glutamate to the nucleotide precursor UDP-N-acetylmuramoyl-L-alanine (UMA). In Listeria innocua serovar 6a (strain ATCC BAA-680 / CLIP 11262), this protein is UDP-N-acetylmuramoylalanine--D-glutamate ligase.